Reading from the N-terminus, the 59-residue chain is Large ribosomal subunit protein uL30 (59 aa).

It belongs to the universal ribosomal protein uL30 family. In terms of assembly, part of the 50S ribosomal subunit.

This Haemophilus influenzae (strain 86-028NP) protein is Large ribosomal subunit protein uL30.